A 184-amino-acid chain; its full sequence is Elongation factor P (184 aa).

The protein belongs to the elongation factor P family.

The protein resides in the cytoplasm. It functions in the pathway protein biosynthesis; polypeptide chain elongation. Functionally, involved in peptide bond synthesis. Stimulates efficient translation and peptide-bond synthesis on native or reconstituted 70S ribosomes in vitro. Probably functions indirectly by altering the affinity of the ribosome for aminoacyl-tRNA, thus increasing their reactivity as acceptors for peptidyl transferase. In Thermus thermophilus (strain ATCC BAA-163 / DSM 7039 / HB27), this protein is Elongation factor P.